The chain runs to 296 residues: Probable endonuclease 4 (296 aa).

Zn(2+) is bound by residues His-68, His-109, Glu-144, Asp-178, His-181, His-213, Asp-226, His-228, and Glu-258.

Belongs to the AP endonuclease 2 family. Zn(2+) serves as cofactor.

It carries out the reaction Endonucleolytic cleavage to 5'-phosphooligonucleotide end-products.. Its function is as follows. Endonuclease IV plays a role in DNA repair. It cleaves phosphodiester bonds at apurinic or apyrimidinic (AP) sites, generating a 3'-hydroxyl group and a 5'-terminal sugar phosphate. The polypeptide is Probable endonuclease 4 (Staphylococcus aureus (strain Mu3 / ATCC 700698)).